The sequence spans 240 residues: Orotidine 5'-phosphate decarboxylase (240 aa).

Substrate-binding positions include D16, K37, 64-73, T128, R190, Q199, G219, and R220; that span reads DLKFHDIPTT. The Proton donor role is filled by K66.

It belongs to the OMP decarboxylase family. Type 1 subfamily. As to quaternary structure, homodimer.

It catalyses the reaction orotidine 5'-phosphate + H(+) = UMP + CO2. It functions in the pathway pyrimidine metabolism; UMP biosynthesis via de novo pathway; UMP from orotate: step 2/2. Catalyzes the decarboxylation of orotidine 5'-monophosphate (OMP) to uridine 5'-monophosphate (UMP). The sequence is that of Orotidine 5'-phosphate decarboxylase from Prochlorococcus marinus (strain SARG / CCMP1375 / SS120).